A 2925-amino-acid polypeptide reads, in one-letter code: MWDPRAARVPPRDLAVLLCNKSNAFFSLGKWNEAFVAAKECLQWDPTYVKGYYRAGYSLLRLHQPYEAARMFFEGLRLVQRSQDQAPVADFLVGVFTTMSSDSIVLQSFLPCFDHIFTTGFPTEVWQSVIEKLAKKGLWHSFLLLSAKKDRLPRNIHVPELSLKSLFEKYVFIGLYEKMEQVPKLVQWLISIGASVETIGPYPLHALMRLCIQARENHLFRWLMDHKPEWKGRINQKDGDGCTVLHVVAAHSPGYLVKRQTEDVQMLLRFGADPTLLDRQSRSVVDVLKRNKNFKAIEKINSHLEKLATCSKDLSGFSNGDGPTSENDIFRKVLEQLVKYMNSGNRLLHKNFLKQEVVQRFLRLLSTLQEIPPDLVCDINQDCATTVFKFLLEKQRWPEVLLLLTRKVSGEPPLGDCLIKDCNFSDLDICTIIPHLSTWDQRKKQLLGCLIDSGALPDGLQESQERPVVTCLKHEDFELAFLLLTKGADPRAISLTEGDTPLHAALHIFLEIKADIGFSFLSHLLDLFWSNPTEFDYLNPNVQDSNGNTLMHILFQKGMLKRVKKLLDLLVKFDINFNLKNKEGKDARHRIKKNDSLLLAWNKALMENRRRSRQDSAAHLGKLSKSTAPGHTSQLKSQGSFKSVPCGATARTLPEGSAVPDSWETLPGTQVTRKEPGALRPCSLRDCLMQDITVLIQQVEVDPSFPEDCLQSSEPLEAGAGKEGKKDDKPTLGAGAPDCSEVGEGHAQVGLGALQLVPDDNRGKEGNDDQDDWSTQEIEACLQDFDNMTWEIECTSEMLKKLSSKVMTKVIKKKIILAIQQLGNGEWTQGLQKRLKHLKGSIQLFEAKLDKGARMLWELAIDFSPRCSENPEKIIATEQNTCAMEKSGRIYTEIIRIWDIVLDHCKLADSIKAICNAYNRGLSCVLRKKLKGINKGQVSANMKIQKRIPRCYVEDTEAEKGREHVNPEYFPPASAVETEYNIMKFHSFSTNMAFNILNDTTATVEYPFRVGELEYAVIDLNPRPLEPIILIGRSGTGKTTCCLYRLWKKFHVYWEKAEQAGSPLLAKQVWLKRRLEVEPGKESPGGEEEEEEEDEEEEDSIEVETVESIDEQEYEACAGGAGVEPAGDGQAAEVCAPEHPHQLEHLHQIFVTKNHVLCQEVQRNFIELSKSTKATSHYKPLDPNIHKLQDLRDENFPLFVTSKQLLLLLDASLPKPFFLRNEDGSLKRTIIGWSAQEESTIPSWQEDEEEAEVDGDYSEEDKAVEMRTGDSDPRVYVTFEVFKNEIWPKMTKGRTAYNPALIWKEIKSFLKGSFEALSCPHGRLTEEVYKKLGRKRCPNFKEDRSEIYSLFSLYQQIRSQKGYFDEEDVLYNISRRLSKLRVLPWSIHELYGDEIQDFTQAELALLMKCINDPNSMFLTGDTAQSIMKGVAFRFSDLRSLFHYASRNTIDKQCAVRKPKKIHQLYQNYRSHSGILNLASGVVDLLQFYFPESFDRLPRDSGLFDGPKPTVLESCSVSDLAILLRGNKRKTQPIEFGAHQVILVANETAKEKIPEELGLALVLTIYEAKGLEFDDVLLYNFFTDSEAYKEWKIISSFTPTSTDSREENRPLVEVPLDKPGSSQGRSLMVNPEMYKLLNGELKQLYTAITRARVNLWIFDENREKRAPAFKYFIRRDFVQVVKTDENKDFDDSMFVKTSTPAEWIAQGDYYAKHQCWKVAAKCYQKGGAFEKEKLALAHDTALSMKSKKVSPKEKQLEYLELAKTYLECKEPTLSLKCLSYAKEFQLSAQLCERLGKIRDAAYFYKRSQCYKDAFRCFEQIQEFDLALKMYCQEELFEEAAIAVEKYEEMLKTKTLPISKLSYSASQFYLEAAAKYLSANKMKEMMAVLSKLDIEDQLVFLKSRKRLAEAADLLNREGRREEAALLMKQHGCLLEAARLTADKDFQASCLLGAARLNVARDSDIEHTKDILREALDICYQTGQLSGIAEAHFLQGVILRDFQKLRDAFFKFDTLNHSAGVVEALYEAASQCEAEPEKILGLAPGGLEILLSLVRALKRVTNNAEKEMVKSCFEFFGISQVDAKYCQIAQNDPGPILRIIFDLDLNLREKKTKDHFLIMTDQVKLALNKHLLGRLCQITRSLLGKTYRGVCMRFIVGLKCEDENCEHFHRPLRRCEAKCLVQSKMNLVAINGLLLEAKKVFPKILAEELKEIDYILSTDMYGLCKSILDVLFPKHFHQRVLSENPMACKEILKPNYKSFRFYRFALKEYIHFLFENESARNRRESTDLWLSAMQAFLLSSNYPEEFEKLLHQEEDNYNRELKALESEKDERGRGRGSRIKGIEGKFGMLAPNRDDENMDKTHLCFIRLLENCIDQFYVYRNPEDYKRLFFRFMNVLIKRCKEPLIPSIGNTVALLEFQFIHCGVVLARLWKNVILCLPKSYIALLHYWEFLFSKKDKELGDVFSIIQEYKPKDVTRAIQDFRFHLSYLAKVLCGYENVNFNVLLDAFSEIDYVVSGEAERTLVLCLVMLVNAEEILQPYCKPLLYRHFREIESRLQLMSMDCPGQVPERLLKVVKRVLVAVNVKSVAEALQDLLFERDEEYLMDCDWRWDPVHTKGSIVRGLYYEEVRLNRLLCLDPVDYFAEPECEFGQDEMDELALEDRDHVLATILSQKQRKASIQRKLRRACLVVSLCISWRRRVGTQMERVREEAREPRAGNFKKADVDRTQCDLCGVKFTRGPENYFSPSKAFEGAASEVAVLSRAELEREECQERNSESYEQHIHLEHHQRQQVAYQKYSEFFHEKVDPAIDEGKLVVQDIEQSVWIHSHVGSKEHSHMLQKVQEHIKRVSDMVEDLYRRKAWAGAEEAMTRLVNILILSVRDARDWLMKTETRLKKEGIVQEDDYENEVEDFGELRPRRRSRKCGKQRKY.

2 TPR repeats span residues alanine 15 to tyrosine 48 and lysine 50 to serine 82. 6 ANK repeats span residues glutamate 168–threonine 198, proline 203–glycine 232, aspartate 240–leucine 276, serine 463–alanine 492, glutamate 497–phenylalanine 518, and asparagine 546–isoleucine 575. Disordered stretches follow at residues serine 612 to threonine 669, proline 706 to glutamate 741, and valine 1077 to valine 1103. A compositionally biased stretch (polar residues) spans serine 624–phenylalanine 641. The segment covering alanine 720–proline 730 has biased composition (basic and acidic residues). The segment covering glycine 1085–valine 1103 has biased composition (acidic residues). TPR repeat units lie at residues proline 1699–lysine 1732 and leucine 1793–leucine 1826. A coiled-coil region spans residues glutamate 2301 to arginine 2330.

This is TPR and ankyrin repeat-containing protein 1 (TRANK1) from Homo sapiens (Human).